A 657-amino-acid chain; its full sequence is Glycogen debranching enzyme (657 aa).

The active-site Nucleophile is Asp336. Catalysis depends on Glu371, which acts as the Proton donor. Residues 460-479 form a disordered region; sequence ANGEENRDGTNNNYSNNHGK.

This sequence belongs to the glycosyl hydrolase 13 family.

The enzyme catalyses Hydrolysis of (1-&gt;6)-alpha-D-glucosidic linkages to branches with degrees of polymerization of three or four glucose residues in limit dextrin.. It functions in the pathway glycan degradation; glycogen degradation. In terms of biological role, removes maltotriose and maltotetraose chains that are attached by 1,6-alpha-linkage to the limit dextrin main chain, generating a debranched limit dextrin. The polypeptide is Glycogen debranching enzyme (Escherichia coli O17:K52:H18 (strain UMN026 / ExPEC)).